The following is a 285-amino-acid chain: 4-hydroxybenzoate octaprenyltransferase (285 aa).

A run of 7 helical transmembrane segments spans residues 17-37 (PVGI…AGAG), 41-61 (PKVL…GCVI), 92-112 (LLLF…LNPL), 135-155 (HWPQ…AFAA), 158-178 (GTVP…ATVY), 216-236 (ALLL…YYYL), and 263-283 (AFLN…LHYL).

It belongs to the UbiA prenyltransferase family. Mg(2+) is required as a cofactor.

The protein resides in the cell inner membrane. The catalysed reaction is all-trans-octaprenyl diphosphate + 4-hydroxybenzoate = 4-hydroxy-3-(all-trans-octaprenyl)benzoate + diphosphate. It functions in the pathway cofactor biosynthesis; ubiquinone biosynthesis. Its function is as follows. Catalyzes the prenylation of para-hydroxybenzoate (PHB) with an all-trans polyprenyl group. Mediates the second step in the final reaction sequence of ubiquinone-8 (UQ-8) biosynthesis, which is the condensation of the polyisoprenoid side chain with PHB, generating the first membrane-bound Q intermediate 3-octaprenyl-4-hydroxybenzoate. The sequence is that of 4-hydroxybenzoate octaprenyltransferase from Nitrosococcus oceani (strain ATCC 19707 / BCRC 17464 / JCM 30415 / NCIMB 11848 / C-107).